The primary structure comprises 192 residues: Soluble inorganic pyrophosphatase 2 (192 aa).

The substrate site is built by lysine 38, arginine 52, and tyrosine 64. Mg(2+) is bound by residues aspartate 74, aspartate 79, and aspartate 111. Tyrosine 148 is a binding site for substrate.

Monomer. Mg(2+) serves as cofactor. Post-translationally, the N-terminus is blocked.

The protein resides in the mitochondrion. The enzyme catalyses diphosphate + H2O = 2 phosphate + H(+). The protein is Soluble inorganic pyrophosphatase 2 (ppa2) of Chlamydomonas reinhardtii (Chlamydomonas smithii).